Reading from the N-terminus, the 450-residue chain is Glutamate--tRNA ligase 2 (450 aa).

The 'HIGH' region motif lies at 10 to 20; the sequence is PSPTGRIHIGN. The 'KMSKS' region signature appears at 243-247; it reads GFSKR. Lys246 contacts ATP.

This sequence belongs to the class-I aminoacyl-tRNA synthetase family. Glutamate--tRNA ligase type 1 subfamily. As to quaternary structure, monomer.

The protein localises to the cytoplasm. The enzyme catalyses tRNA(Glu) + L-glutamate + ATP = L-glutamyl-tRNA(Glu) + AMP + diphosphate. Its function is as follows. Catalyzes the attachment of glutamate to tRNA(Glu) in a two-step reaction: glutamate is first activated by ATP to form Glu-AMP and then transferred to the acceptor end of tRNA(Glu). The sequence is that of Glutamate--tRNA ligase 2 from Beijerinckia indica subsp. indica (strain ATCC 9039 / DSM 1715 / NCIMB 8712).